A 448-amino-acid chain; its full sequence is Nucleoprotein (448 aa).

Polar residues-rich tracts occupy residues 1–20 (MSFT…NRSG), 29–38 (QSDQSRNVQT), and 45–55 (PKQTATSQLPS). The disordered stretch occupies residues 1–55 (MSFTPGKQSSSRASFGNRSGNGILKWADQSDQSRNVQTRGRRAQPKQTATSQLPS). Positions 52 to 194 (QLPSGGNVVP…GYYIEGSGRS (143 aa)) are RNA-binding. Residues 61–190 (PYYSWFSGIT…VLPQGYYIEG (130 aa)) enclose the CoV N NTD domain. Residues R106, R122, and R164 each contribute to the RNA site. Disordered regions lie at residues 157 to 231 (TPAD…VTPD), 266 to 297 (ILNK…NFGG), and 385 to 448 (GMMN…TSEI). Position 167 is a phosphoserine; by host (S167). T174 bears the Phosphothreonine; by host mark. The residue at position 191 (S191) is a Phosphoserine; by host. Positions 193 to 223 (RSAPNSRSTSRASSRASSAGSRSRANSGNRT) are enriched in low complexity. The 126-residue stretch at 259-384 (AKEIRQKILN…ENLNAYQQQD (126 aa)) folds into the CoV N CTD domain. Residues 266–276 (ILNKPRQKRSP) are compositionally biased toward basic residues. Positions 266–384 (ILNKPRQKRS…ENLNAYQQQD (119 aa)) are dimerization. S390 is subject to Phosphoserine; by host. A compositionally biased stretch (polar residues) spans 399–409 (QKNGQGENDNI). Positions 422–439 (KSRELTAEDISLLKKMDE) are enriched in basic and acidic residues. S423 is modified (phosphoserine; by host). T427 carries the phosphothreonine; by host modification.

The protein belongs to the betacoronavirus nucleocapsid protein family. As to quaternary structure, homooligomer. Both monomeric and oligomeric forms interact with RNA. Interacts with protein M. Interacts with NSP3; this interaction serves to tether the genome to the newly translated replicase-transcriptase complex at a very early stage of infection. Post-translationally, ADP-ribosylated. The ADP-ribosylation is retained in the virion during infection. Phosphorylated on serine and threonine residues.

It localises to the virion. The protein localises to the host endoplasmic reticulum-Golgi intermediate compartment. The protein resides in the host Golgi apparatus. In terms of biological role, packages the positive strand viral genome RNA into a helical ribonucleocapsid (RNP) and plays a fundamental role during virion assembly through its interactions with the viral genome and membrane protein M. Plays an important role in enhancing the efficiency of subgenomic viral RNA transcription as well as viral replication. In Bos taurus (Bovine), this protein is Nucleoprotein.